The primary structure comprises 172 residues: Interferon tau-2 (172 aa).

2 disulfide bridges follow: Cys-1-Cys-99 and Cys-29-Cys-139. A glycan (N-linked (GlcNAc...) asparagine) is linked at Asn-78.

It belongs to the alpha/beta interferon family. IFN-alphaII subfamily. In terms of tissue distribution, constitutively and exclusively expressed in the mononuclear cells of the extraembryonic trophectoderm.

It is found in the secreted. Its function is as follows. Paracrine hormone primarily responsible for maternal recognition of pregnancy. Interacts with endometrial receptors, probably type I interferon receptors, and blocks estrogen receptor expression, preventing the estrogen-induced increase in oxytocin receptor expression in the endometrium. This results in the suppression of the pulsatile endometrial release of the luteolytic hormone prostaglandin F2-alpha, hindering the regression of the corpus luteum (luteolysis) and therefore a return to ovarian cyclicity. This, and a possible direct effect of IFN-tau on prostaglandin synthesis, leads in turn to continued ovarian progesterone secretion, which stimulates the secretion by the endometrium of the nutrients required for the growth of the conceptus. In summary, displays particularly high antiviral and antiproliferative potency concurrently with particular weak cytotoxicity, high antiluteolytic activity and immunomodulatory properties. In contrast with other IFNs, IFN-tau is not virally inducible. This is Interferon tau-2 (IFNT2) from Bos taurus (Bovine).